We begin with the raw amino-acid sequence, 7067 residues long: Replicase polyprotein 1ab (7067 aa).

Residues 12–127 enclose the CoV Nsp1 globular domain; it reads THVQLSLPVL…YRNVLLRKNG (116 aa). In terms of domain architecture, BetaCoV Nsp1 C-terminal spans 148–179; sequence ELGTDPIEDYEQNWNTKHGSGALRELTRELNG. The 274-residue stretch at 183 to 456 folds into the CoV Nsp2 N-terminal domain; it reads TRYVDNNFCG…NEDLLEILNR (274 aa). Residues C200, C231, H234, H236, C323, C326, C341, C344, C370, C373, H382, and C416 each coordinate Zn(2+). The interval 200–236 is C2H2; it reads CIKDFLARAGKSMCTLSEQLDYIESKRGVYCCREHEH. Positions 323–344 are C4; it reads CNHCDEVSWQTCDFLKATCEQC. Positions 370–416 are C2HC; it reads CPACQDPEVGPEHSVADYHNHSNIETRLRKGGRTKCFGGCVFSYVGC. Residues 458 to 688 enclose the CoV Nsp2 middle domain; that stretch reads RVNINIVGDF…LGVVNKALEM (231 aa). Residues 690–818 form the CoV Nsp2 C-terminal domain; it reads LDQVTIAGTK…TNNVFRLKGG (129 aa). The 109-residue stretch at 822–930 folds into the Ubiquitin-like 1 domain; it reads KGVTFGEDTV…MYCSFYPPDE (109 aa). Macro domains are found at residues 998 to 1164, 1201 to 1329, and 1337 to 1464; these read VNQF…LDYL, KIKA…LPSE, and VLGT…TSSS. Residues 1466–1532 enclose the DPUP domain; that stretch reads TPEEYFVETT…PLDKLKSLLS (67 aa). In terms of domain architecture, Ubiquitin-like 2 spans 1536–1591; it reads VKTIKVFTTVDNTNLHTHIVDMSMTYGQQFGPTYLDGADVTKIKPHVNHEGKTFFV. The region spanning 1605-1869 is the Peptidase C16 domain; it reads YYHTIDESFL…YTEIEPKLDG (265 aa). C1645 acts as the For PL-PRO activity in catalysis. Zn(2+) contacts are provided by C1723, C1726, C1758, and C1760. Residues 1723–1760 form a C4-type zinc finger; the sequence is CKHCGQKTTTLKGVEAVMYMGTLSYDELKTGVSIPCVC. Residues H1806 and D1820 each act as for PL-PRO activity in the active site. The 111-residue stretch at 1882-1992 folds into the Nucleic acid-binding domain; that stretch reads PIDLVPTQPM…CLWSTKPVDT (111 aa). Residues 2017–2126 form the G2M domain; the sequence is TTSEEVVENP…LGQTAVITSN (110 aa). Residues 2086 to 2365 form an HD1 region; that stretch reads LALGLKTLAT…IFFASFYYVW (280 aa). Residues 2197 to 2217 form a helical membrane-spanning segment; the sequence is LFTIVMWLLLLSICLGSLTYV. In terms of domain architecture, 3Ecto spans 2218–2288; the sequence is TAVLGVCLSS…QVTISSYKLD (71 aa). Intrachain disulfides connect C2234–C2262 and C2253–C2259. 2 helical membrane-spanning segments follow: residues 2298–2318 and 2345–2365; these read WLLAYMLFTKFFYLLGLSAIM and MAPVSAMVRMYIFFASFYYVW. The tract at residues 2366-2456 is Y1; that stretch reads KSYVHIMDGC…QFKRPINPTD (91 aa). A CoV Nsp3 Y domain is found at 2366–2734; that stretch reads KSYVHIMDGC…ITTKISLKGG (369 aa). Zn(2+) is bound by residues H2370, C2375, C2380, C2383, C2416, H2419, C2423, and C2426. Positions 2370–2383 are ZF1; the sequence is HIMDGCTSSTCMMC. A ZF2 region spans residues 2416–2426; the sequence is CKAHNWNCLNC. The segment at 2457 to 2551 is Y2; the sequence is QSAYVVDSVT…LLDQALVSDV (95 aa). A coV-Y region spans residues 2457-2734; that stretch reads QSAYVVDSVT…ITTKISLKGG (278 aa). Positions 2552–2633 are Y3; sequence GDSTEVSVKM…ECLKLSHHSD (82 aa). The interval 2634-2734 is Y4; it reads IEVTGDSCNN…ITTKISLKGG (101 aa). 7 helical membrane-spanning segments follow: residues 2744–2764, 2986–3006, 3016–3036, 3048–3068, 3071–3091, 3099–3119, and 3136–3156; these read LLKVTLLCVLAALFCYVIMPV, PGVFCGVDAMNLIANIFTPLV, ASVVAGGIIAILVTCAAYYFM, VVAANALLFLMSFTILCLAPA, FLPGVYSIFYLYLTFYFTNDV, WFAMFSPIVPFWITAIYVFCI, and VMFNGVTFSTFEEAALCTFLL. Residues 2749-3156 form an HD2 region; it reads LLCVLAALFC…EEAALCTFLL (408 aa). Positions 3136–3234 constitute a Nsp4C domain; the sequence is VMFNGVTFST…QTSITSAVLQ (99 aa). Positions 3235-3540 constitute a Peptidase C30 domain; that stretch reads SGFRKMAFPS…VRQCSGVTFQ (306 aa). Catalysis depends on for 3CL-PRO activity residues H3275 and C3379. A run of 7 helical transmembrane segments spans residues 3558–3578, 3580–3600, 3606–3626, 3652–3672, 3679–3698, 3722–3742, and 3750–3770; these read FLTSLLILVQSTQWSLFFFVY, NAFLPFALGIMAVAACAMLLV, FLCLFLLPSLATVAYFNMVYM, DCVMYASALVLLILMTARTVY, VWTLMNVITLVYKVYYGNSL, IMFLARAIVFVCVEYYPLLFI, and IMLVYCFLGYCCCCYFGLFCL. The segment at 3558-3770 is HD3; it reads FLTSLLILVQ…CCCYFGLFCL (213 aa). The 83-residue stretch at 3831–3913 folds into the RdRp Nsp7 cofactor domain; the sequence is SKMSDVKCTS…EMLDNRATLQ (83 aa). Positions 3914-4111 constitute a RdRp Nsp8 cofactor domain; it reads AIASEFSSLP…LRANSAVKLQ (198 aa). The Nsp9 ssRNA-binding domain occupies 4112–4224; the sequence is NNELSPVALR…GSLAATVRLQ (113 aa). The region spanning 4225 to 4363 is the ExoN/MTase coactivator domain; that stretch reads AGNATEVPAN…CDQLREPMMQ (139 aa). Positions 4298, 4301, 4307, 4314, 4341, 4344, 4352, and 4354 each coordinate Zn(2+). Zinc fingers lie at residues 4298–4314 and 4341–4354; these read CLYCRCHIDHPNPKGFC and CTVCGMWKGYGCSC. The NiRAN domain occupies 4370–4624; the sequence is FLNRVCGVSA…AAESHMDADL (255 aa). Residues N4572 and D4581 each contribute to the Mn(2+) site. A Nsp12 Interface domain is found at 4629–4727; it reads VKWDLLKYDF…HNQDVNLHSS (99 aa). 5 residues coordinate Zn(2+): H4658, C4664, C4669, C4673, and C4850. Residues 4728-5295 form the Nsp12 RNA-dependent RNA polymerase domain; it reads RLSFKELLVY…AMYTPHTVLQ (568 aa). A rdRp Fingers N-ter region spans residues 4730–4944; the sequence is SFKELLVYAA…HQKLLKSIAA (215 aa). Residues 4945–4983 are rdRp Palm N-ter; sequence TRGATVVIGTSKFYGGWHNMLKTVYSDVESPHLMGWDYP. The 163-residue stretch at 4975 to 5137 folds into the RdRp catalytic domain; sequence PHLMGWDYPK…CYNSNYAAQG (163 aa). Residues 4984 to 5042 form a rdRp Fingers C-ter region; the sequence is KCDRAMPNMLRIMASLILARKHSTCCNLSHRFYRLANECAQVLSEMVMCGGSLYVKPGG. Positions 5005, 5008, and 5009 each coordinate Zn(2+). Residues 5043 to 5178 form a rdRp Palm C-ter region; it reads TSSGDATTAY…TRGPHEFCSQ (136 aa). Residues S5122, D5123, and D5124 contribute to the active site. Positions 5179 to 5295 are rdRp Thumb; sequence HTMLVKQGDD…AMYTPHTVLQ (117 aa). The region spanning 5296–5408 is the CV ZBD domain; that stretch reads AVGACVLCNS…TDFNAIATCD (113 aa). The Zn(2+) site is built by C5300, C5303, C5311, C5314, C5321, C5324, H5328, H5334, C5345, C5350, C5367, and H5370. The (+)RNA virus helicase ATP-binding domain occupies 5552–5733; that stretch reads NISNEFSSNV…MKTIGPDMFL (182 aa). 5577–5584 lines the ATP pocket; the sequence is GPPGTGKS. The (+)RNA virus helicase C-terminal domain maps to 5734–5903; it reads GTCRRCPAEI…TLQAENVTGL (170 aa). An ExoN domain is found at 5968–6183; it reads MFITREEAIR…RCLAVHECFV (216 aa). Catalysis depends on residues D5986, E5988, and E6087. The Zn(2+) site is built by C6103, C6106, C6122, H6125, H6153, C6157, and H6160. Active-site residues include H6164 and D6169. C6175 is a Zn(2+) binding site. One can recognise an N7-MTase domain in the interval 6192–6423; sequence YPIIGDELKI…NLWNTFTKLQ (232 aa). An S-adenosyl-L-methionine-binding site is contributed by 6227–6233; sequence DIGNPKA. A gpppA-binding region spans residues 6310–6324; that stretch reads CDGGSLYVNKHAFHT. Positions 6348, 6369, 6380, and 6383 each coordinate Zn(2+). A Nsp15 N-terminal oligomerization domain is found at 6424–6484; that stretch reads SLENVAYNVV…NVAFELWAKR (61 aa). In terms of domain architecture, AV-Nsp11N/CoV-Nsp15M spans 6485–6610; that stretch reads NIKPVPEIKI…YFKKVDGIIQ (126 aa). Residues 6627-6766 form the NendoU domain; sequence KPRSQMETDF…KDGHVETFYP (140 aa). Residues H6657, H6672, K6712, K6815, D6899, K6939, and E6972 contribute to the active site. The Nidovirus-type SAM-dependent 2'-O-MTase domain occupies 6771-7065; that stretch reads SQAWQPGVAM…RVVVSSDILV (295 aa).

Belongs to the coronaviruses polyprotein 1ab family. Interacts with host PHB and PHB2. As to quaternary structure, interacts with papain-like protease nsp3 and non-structural protein 6. In terms of assembly, monomer. Homodimer. Only the homodimer shows catalytic activity. Interacts with nsp8 and nsp12 to form the replication-transcription complex (RTC): nsp12, nsp7, two subunits of nsp8, and up to two subunits of nsp13. As to quaternary structure, interacts with nsp7, nsp13 and nsp12 to form the replication-transcription complex (RTC): nsp12, nsp7, two subunits of nsp8, and up to two subunits of nsp13. In terms of assembly, interacts with nsp12. Interacts with proofreading exoribonuclease nsp14 and 2'-O-methyltransferase nsp16; these interactions enhance nsp14 and nsp16 enzymatic activities. As to quaternary structure, interacts with nsp7 and nsp8 to form the replication-transcription complex (RTC): nsp12, nsp7, two subunits of nsp8, and up to two subunits of nsp13. Interacts with nsp9. In terms of assembly, interacts with nsp8 to form the replication-transcription complex (RTC): nsp12, nsp7, two subunits of nsp8, and up to two subunits of nsp13. Mn(2+) serves as cofactor. It depends on Mg(2+) as a cofactor. In terms of processing, specific enzymatic cleavages in vivo by its own proteases yield mature proteins. 3CL-PRO and PL-PRO proteinases are autocatalytically processed.

Its subcellular location is the host membrane. The protein resides in the host cytoplasm. The protein localises to the host perinuclear region. It localises to the host endoplasmic reticulum-Golgi intermediate compartment. It carries out the reaction RNA(n) + a ribonucleoside 5'-triphosphate = RNA(n+1) + diphosphate. The catalysed reaction is ATP + H2O = ADP + phosphate + H(+). It catalyses the reaction Thiol-dependent hydrolysis of ester, thioester, amide, peptide and isopeptide bonds formed by the C-terminal Gly of ubiquitin (a 76-residue protein attached to proteins as an intracellular targeting signal).. The enzyme catalyses a 5'-end (N(7)-methyl 5'-triphosphoguanosine)-ribonucleoside in mRNA + S-adenosyl-L-methionine = a 5'-end (N(7)-methyl 5'-triphosphoguanosine)-(2'-O-methyl-ribonucleoside) in mRNA + S-adenosyl-L-homocysteine + H(+). It carries out the reaction uridylyl-uridylyl-ribonucleotide-RNA = a 3'-end uridylyl-2',3'-cyclophospho-uridine-RNA + a 5'-end dephospho-ribonucleoside-RNA. The catalysed reaction is a 5'-end diphospho-ribonucleoside in mRNA + GTP + H(+) = a 5'-end (5'-triphosphoguanosine)-ribonucleoside in mRNA + diphosphate. It catalyses the reaction a 5'-end (5'-triphosphoguanosine)-ribonucleoside in mRNA + S-adenosyl-L-methionine = a 5'-end (N(7)-methyl 5'-triphosphoguanosine)-ribonucleoside in mRNA + S-adenosyl-L-homocysteine. Its function is as follows. The replicase polyprotein of coronaviruses is a multifunctional protein: it contains the activities necessary for the transcription of negative stranded RNA, leader RNA, subgenomic mRNAs and progeny virion RNA as well as proteinases responsible for the cleavage of the polyprotein into functional products. Inhibits host translation by interacting with the 40S ribosomal subunit. The nsp1-40S ribosome complex further induces an endonucleolytic cleavage near the 5'UTR of host mRNAs, targeting them for degradation. Viral mRNAs are not susceptible to nsp1-mediated endonucleolytic RNA cleavage thanks to the presence of a 5'-end leader sequence and are therefore protected from degradation. By suppressing host gene expression, nsp1 facilitates efficient viral gene expression in infected cells and evasion from host immune response. Functionally, may play a role in the modulation of host cell survival signaling pathway by interacting with host PHB and PHB2. Indeed, these two proteins play a role in maintaining the functional integrity of the mitochondria and protecting cells from various stresses. In terms of biological role, responsible for the cleavages located at the N-terminus of the replicase polyprotein. In addition, PL-PRO possesses a deubiquitinating/deISGylating activity and processes both 'Lys-48'- and 'Lys-63'-linked polyubiquitin chains from cellular substrates. Participates together with nsp4 in the assembly of virally-induced cytoplasmic double-membrane vesicles necessary for viral replication. Antagonizes innate immune induction of type I interferon by blocking the phosphorylation, dimerization and subsequent nuclear translocation of host IRF3. Also prevents host NF-kappa-B signaling. Its function is as follows. Participates in the assembly of virally-induced cytoplasmic double-membrane vesicles necessary for viral replication. Cleaves the C-terminus of replicase polyprotein at 11 sites. Recognizes substrates containing the core sequence [ILMVF]-Q-|-[SGACN]. Also able to bind an ADP-ribose-1''-phosphate (ADRP). Functionally, plays a role in the initial induction of autophagosomes from host endoplasmic reticulum. Later, limits the expansion of these phagosomes that are no longer able to deliver viral components to lysosomes. In terms of biological role, forms a hexadecamer with nsp8 (8 subunits of each) that may participate in viral replication by acting as a primase. Alternatively, may synthesize substantially longer products than oligonucleotide primers. Its function is as follows. Forms a hexadecamer with nsp7 (8 subunits of each) that may participate in viral replication by acting as a primase. Alternatively, may synthesize substantially longer products than oligonucleotide primers. Forms a primer, NSP9-pU, which is utilized by the polymerase for the initiation of RNA chains. Interacts with ribosome signal recognition particle RNA (SRP). Together with NSP8, suppress protein integration into the cell membrane, thereby disrupting host immune defenses. Functionally, plays a pivotal role in viral transcription by stimulating both nsp14 3'-5' exoribonuclease and nsp16 2'-O-methyltransferase activities. Therefore plays an essential role in viral mRNAs cap methylation. In terms of biological role, RNA-directed RNA polymerase that catalyzes the transcription of viral genomic and subgenomic RNAs. Acts in complex with nsp7 and nsp8 to transcribe both the minus and positive strands of genomic RNA. The kinase-like NiRAN domain of NSP12 attaches one or more nucleotides to the amino terminus of NSP9, forming a covalent RNA-protein intermediate that serves as transcription/replication primer. Subgenomic RNAs (sgRNAs) are formed by discontinuous transcription: The polymerase has the ability to pause at transcription-regulating sequences (TRS) and jump to the leader TRS, resulting in a major deletion. This creates a series of subgenomic RNAs that are replicated, transcribed and translated. In addition, Nsp12 is a subunit of the viral RNA capping enzyme that catalyzes the RNA guanylyltransferase reaction for genomic and sub-genomic RNAs. Subsequently, the NiRAN domain transfers RNA to GDP, and forms the core cap structure GpppA-RNA. Its function is as follows. Multi-functional protein with a zinc-binding domain in N-terminus displaying RNA and DNA duplex-unwinding activities with 5' to 3' polarity. Activity of helicase is dependent on magnesium. Plays a role in viral RNA synthesis through two distinct activities. The N7-guanine methyltransferase activity plays a role in the formation of the cap structure GpppA-RNA. The proofreading exoribonuclease reduces the sensitivity of the virus to RNA mutagens during replication. This activity acts on both ssRNA and dsRNA in a 3'-5' direction. Functionally, plays a role in viral transcription/replication and prevents the simultaneous activation of host cell dsRNA sensors, such as MDA5/IFIH1, OAS, and PKR. Acts by degrading the 5'-polyuridines generated during replication of the poly(A) region of viral genomic and subgenomic RNAs. Catalyzes a two-step reaction in which a 2'3'-cyclic phosphate (2'3'-cP) is first generated by 2'-O transesterification, which is then hydrolyzed to a 3'-phosphate (3'-P). If not degraded, poly(U) RNA would hybridize with poly(A) RNA tails and activate host dsRNA sensors. In terms of biological role, methyltransferase that mediates mRNA cap 2'-O-ribose methylation to the 5'-cap structure of viral mRNAs. N7-methyl guanosine cap is a prerequisite for binding of nsp16. Therefore plays an essential role in viral mRNAs cap methylation which is essential to evade immune system. This Bat coronavirus HKU3 (BtCoV) protein is Replicase polyprotein 1ab (rep).